A 600-amino-acid polypeptide reads, in one-letter code: UvrABC system protein C (600 aa).

A GIY-YIG domain is found at 15–100 (NSAGVYQYFN…IKQLHPKYNI (86 aa)). The region spanning 203–238 (SVLLKNLEKQMLVLAQNENYEEAAKVRDQIAMIKDL) is the UVR domain.

This sequence belongs to the UvrC family. As to quaternary structure, interacts with UvrB in an incision complex.

It is found in the cytoplasm. Functionally, the UvrABC repair system catalyzes the recognition and processing of DNA lesions. UvrC both incises the 5' and 3' sides of the lesion. The N-terminal half is responsible for the 3' incision and the C-terminal half is responsible for the 5' incision. This chain is UvrABC system protein C, found in Campylobacter jejuni (strain RM1221).